A 245-amino-acid chain; its full sequence is Putative transport permease YvfS (245 aa).

A run of 6 helical transmembrane segments spans residues 20–40 (YFVL…TNVV), 53–73 (HYLM…TLGI), 103–123 (IGQS…GAII), 137–157 (GLWI…IGLM), 164–184 (AGIS…WMPF), and 214–234 (GSPT…FMLL). One can recognise an ABC transmembrane type-2 domain in the interval 20–242 (YFVLWSLIMP…LLSKYIRRKQ (223 aa)).

The protein belongs to the ABC-2 integral membrane protein family.

Its subcellular location is the cell membrane. The protein is Putative transport permease YvfS (yvfS) of Bacillus subtilis (strain 168).